Here is a 322-residue protein sequence, read N- to C-terminus: Methionyl-tRNA formyltransferase (322 aa).

A (6S)-5,6,7,8-tetrahydrofolate-binding site is contributed by 113–116 (SLLP).

Belongs to the Fmt family.

The catalysed reaction is L-methionyl-tRNA(fMet) + (6R)-10-formyltetrahydrofolate = N-formyl-L-methionyl-tRNA(fMet) + (6S)-5,6,7,8-tetrahydrofolate + H(+). Functionally, attaches a formyl group to the free amino group of methionyl-tRNA(fMet). The formyl group appears to play a dual role in the initiator identity of N-formylmethionyl-tRNA by promoting its recognition by IF2 and preventing the misappropriation of this tRNA by the elongation apparatus. The chain is Methionyl-tRNA formyltransferase from Blochmanniella pennsylvanica (strain BPEN).